The following is a 294-amino-acid chain: Protoheme IX farnesyltransferase (294 aa).

Transmembrane regions (helical) follow at residues 24-44, 48-68, 96-116, 118-138, 145-165, 172-192, 211-231, 241-263, and 268-288; these read VVLL…PGWV, LIAF…AINH, ALWF…LFVN, LTAL…TGYL, NIVI…TAVT, ALLL…ALAI, GIQF…VVSL, WIYL…KLYF, and VVAM…FVFL.

It belongs to the UbiA prenyltransferase family. Protoheme IX farnesyltransferase subfamily.

Its subcellular location is the cell inner membrane. The enzyme catalyses heme b + (2E,6E)-farnesyl diphosphate + H2O = Fe(II)-heme o + diphosphate. Its pathway is porphyrin-containing compound metabolism; heme O biosynthesis; heme O from protoheme: step 1/1. Its function is as follows. Converts heme B (protoheme IX) to heme O by substitution of the vinyl group on carbon 2 of heme B porphyrin ring with a hydroxyethyl farnesyl side group. This Legionella pneumophila (strain Lens) protein is Protoheme IX farnesyltransferase.